Here is a 469-residue protein sequence, read N- to C-terminus: MGTVHARSLEPLPSSGPDFGGLGEEAEFVEVEPEAKQEILENKDVVVQHVHFDGLGRTKDDIIICEIGDVFKAKNLIEVMRKSHEAREKLLRLGIFRQVDVLIDTCQGDDALPNGLDVTFEVTELRRLTGSYNTMVGNNEGSMVLGLKLPNLLGRAEKVTFQFSYGTKETSYGLSFFKPRPGNFERNFSVNLYKVTGQFPWSSLRETDRGMSAEYSFPIWKTSHTVKWEGVWRELGCLSRTASFAVRKESGHSLKSSLSHAMVIDSRNSSILPRRGALLKVNQELAGYTGGDVSFIKEDFELQLNKQLIFDSVFSASFWGGMLVPIGDKPSSIADRFYLGGPTSIRGFSMHSIGPQSEGDYLGGEAYWAGGLHLYTPLPFRPGQGGFGELFRTHFFLNAGNLCNLNYGEGPKAHIRKLAECIRWSYGAGIVLRLGNIARLELNYCVPMGVQTGDRICDGVQFGAGIRFL.

Positions 1–20 are disordered; that stretch reads MGTVHARSLEPLPSSGPDFG. Positions 45-125 constitute a POTRA domain; the sequence is VVVQHVHFDG…LDVTFEVTEL (81 aa). Position 255 is an N6-methyllysine (lysine 255).

The protein belongs to the SAM50/omp85 family. In terms of assembly, associates with the mitochondrial contact site and cristae organizing system (MICOS) complex, composed of at least MICOS10/MIC10, CHCHD3/MIC19, CHCHD6/MIC25, APOOL/MIC27, IMMT/MIC60, APOO/MIC23/MIC26 and QIL1/MIC13. This complex was also known under the names MINOS or MitOS complex. The MICOS complex associates with mitochondrial outer membrane proteins SAMM50, MTX1 and MTX2 (together described as components of the mitochondrial outer membrane sorting assembly machinery (SAM) complex) and DNAJC11, mitochondrial inner membrane protein TMEM11 and with HSPA9. The MICOS and SAM complexes together with DNAJC11 are part of a large protein complex spanning both membranes termed the mitochondrial intermembrane space bridging (MIB) complex. Interacts with CHCHD3/MIC19. Interacts with ARMC1. (Microbial infection) Interacts with parasite T.gondii RH strain MAF1b1; the interaction is probably indirect and results in the disruption of the MIB complex and the formation of SPOTs (structures positive for outer mitochondrial membrane (OMM)), a cellular response to OMM stress, which leads to the constitutive shedding of OMM vesicles.

It is found in the mitochondrion outer membrane. Its subcellular location is the cytoplasm. It localises to the mitochondrion. Its function is as follows. Plays a crucial role in the maintenance of the structure of mitochondrial cristae and the proper assembly of the mitochondrial respiratory chain complexes. Required for the assembly of TOMM40 into the TOM complex. The protein is Sorting and assembly machinery component 50 homolog (SAMM50) of Homo sapiens (Human).